A 218-amino-acid chain; its full sequence is Uracil-DNA glycosylase (218 aa).

Aspartate 59 serves as the catalytic Proton acceptor.

The protein belongs to the uracil-DNA glycosylase (UDG) superfamily. UNG family.

It is found in the cytoplasm. It carries out the reaction Hydrolyzes single-stranded DNA or mismatched double-stranded DNA and polynucleotides, releasing free uracil.. Excises uracil residues from the DNA which can arise as a result of misincorporation of dUMP residues by DNA polymerase or due to deamination of cytosine. The polypeptide is Uracil-DNA glycosylase (Staphylococcus aureus (strain MSSA476)).